Here is a 151-residue protein sequence, read N- to C-terminus: Actin-depolymerizing factor 10 (151 aa).

The 135-residue stretch at proline 15–asparagine 149 folds into the ADF-H domain.

This sequence belongs to the actin-binding proteins ADF family.

Functionally, actin-depolymerizing protein. Severs actin filaments (F-actin) and binds to actin monomers. This Oryza sativa subsp. japonica (Rice) protein is Actin-depolymerizing factor 10 (ADF10).